Here is a 586-residue protein sequence, read N- to C-terminus: Probable zinc metalloprotease EGY3, chloroplastic (586 aa).

The N-terminal 54 residues, 1-54 (MSSSSLVTSLLFSSSSSSNTATSTSSRRSFSLFSKNQYCKPSPLRRSSSLLLVR), are a transit peptide targeting the chloroplast. The segment covering 62–73 (EEKAAPAAESHH) has biased composition (basic and acidic residues). The segment at 62–118 (EEKAAPAAESHHAGGGQDDAATASHHAVEGENGVADADGGGVKKSKEELEEEEQQEV) is disordered. A coiled-coil region spans residues 103 to 195 (VKKSKEELEE…NTFKALDLNK (93 aa)). A run of 7 helical transmembrane segments spans residues 287-307 (LSAV…SGFF), 318-338 (VSDV…SEIA), 389-409 (ASAY…DGSL), 427-447 (PLLS…GNVL), 454-474 (VGVP…VTSL), 506-526 (VALG…WGLF), and 550-570 (YAWG…NGGG).

This sequence belongs to the peptidase M50B family.

The protein localises to the plastid. It localises to the chloroplast membrane. Its function is as follows. Probable membrane-associated metalloprotease that may be involved in chloroplast development. The polypeptide is Probable zinc metalloprotease EGY3, chloroplastic (EGY3) (Oryza sativa subsp. indica (Rice)).